A 557-amino-acid chain; its full sequence is Hepatocyte nuclear factor 1-beta (557 aa).

A dimerization region spans residues 1–31 (MVSKLTSLQQELLSALLSSGVTKEVLVQALE). The 32-residue stretch at 1 to 32 (MVSKLTSLQQELLSALLSSGVTKEVLVQALEE) folds into the HNF-p1 domain. Ser-49, Ser-52, Ser-75, and Ser-80 each carry phosphoserine. Residues 64-85 (TLTNGHAKGRLSGDEGSEDGDD) form a disordered region. A POU-specific atypical domain is found at 93 to 188 (KELQALNTEE…ILRQFNQTVQ (96 aa)). Residues 231-311 (MRRNRFKWGP…NRRKEEAFRQ (81 aa)) constitute a DNA-binding region (homeobox; HNF1-type). The tract at residues 324 to 352 (HSLNPLLSHGSPHHQPSSSPPNKLSGVRY) is disordered. The span at 328–344 (PLLSHGSPHHQPSSSPP) shows a compositional bias: low complexity.

The protein belongs to the HNF1 homeobox family. Binds DNA as a dimer. Can form homodimer or heterodimer with HNF1-alpha. Interacts (via HNF-p1 domain) with PCBD1; the interaction increases its transactivation activity.

It localises to the nucleus. Functionally, transcription factor that binds to the inverted palindrome 5'-GTTAATNATTAAC-3'. Binds to the FPC element in the cAMP regulatory unit of the PLAU gene. Transcriptional activity is increased by coactivator PCBD1. The polypeptide is Hepatocyte nuclear factor 1-beta (HNF1B) (Homo sapiens (Human)).